Here is a 247-residue protein sequence, read N- to C-terminus: Aliphatic sulfonates import ATP-binding protein SsuB 3 (247 aa).

The 215-residue stretch at 28–242 (VSVRGLQRRY…ALRSILLEEL (215 aa)) folds into the ABC transporter domain. 60-67 (GESGCGKT) lines the ATP pocket.

This sequence belongs to the ABC transporter superfamily. Aliphatic sulfonates importer (TC 3.A.1.17.2) family. In terms of assembly, the complex is composed of two ATP-binding proteins (SsuB), two transmembrane proteins (SsuC) and a solute-binding protein (SsuA).

It is found in the cell inner membrane. It carries out the reaction ATP + H2O + aliphatic sulfonate-[sulfonate-binding protein]Side 1 = ADP + phosphate + aliphatic sulfonateSide 2 + [sulfonate-binding protein]Side 1.. In terms of biological role, part of the ABC transporter complex SsuABC involved in aliphatic sulfonates import. Responsible for energy coupling to the transport system. This is Aliphatic sulfonates import ATP-binding protein SsuB 3 from Paraburkholderia xenovorans (strain LB400).